The primary structure comprises 438 residues: Enolase (438 aa).

Substrate-binding residues include His-159 and Glu-168. The active-site Proton donor is Glu-211. Mg(2+) contacts are provided by Asp-246, Glu-297, and Asp-322. Residues Glu-297 and Asp-322 each contribute to the substrate site. Catalysis depends on Lys-347, which acts as the Proton acceptor. Substrate-binding positions include 374 to 377 and Lys-398; that span reads SHRS.

The protein belongs to the enolase family. As to quaternary structure, homodimer. Mg(2+) is required as a cofactor.

Its subcellular location is the cytoplasm. The enzyme catalyses (2R)-2-phosphoglycerate = phosphoenolpyruvate + H2O. Its pathway is carbohydrate degradation; glycolysis; pyruvate from D-glyceraldehyde 3-phosphate: step 4/5. This chain is Enolase (emp-7), found in Neurospora crassa (strain ATCC 24698 / 74-OR23-1A / CBS 708.71 / DSM 1257 / FGSC 987).